The chain runs to 548 residues: Chaperonin GroEL (548 aa).

ATP-binding positions include 30–33 (TLGP), Lys51, 87–91 (DGTTT), Gly415, and Asp495.

The protein belongs to the chaperonin (HSP60) family. In terms of assembly, forms a cylinder of 14 subunits composed of two heptameric rings stacked back-to-back. Interacts with the co-chaperonin GroES.

It localises to the cytoplasm. It carries out the reaction ATP + H2O + a folded polypeptide = ADP + phosphate + an unfolded polypeptide.. In terms of biological role, together with its co-chaperonin GroES, plays an essential role in assisting protein folding. The GroEL-GroES system forms a nano-cage that allows encapsulation of the non-native substrate proteins and provides a physical environment optimized to promote and accelerate protein folding. The protein is Chaperonin GroEL of Colwellia psychrerythraea (strain 34H / ATCC BAA-681) (Vibrio psychroerythus).